A 485-amino-acid chain; its full sequence is Glycogen synthase (485 aa).

Lys-21 is an ADP-alpha-D-glucose binding site.

The protein belongs to the glycosyltransferase 1 family. Bacterial/plant glycogen synthase subfamily.

It catalyses the reaction [(1-&gt;4)-alpha-D-glucosyl](n) + ADP-alpha-D-glucose = [(1-&gt;4)-alpha-D-glucosyl](n+1) + ADP + H(+). It functions in the pathway glycan biosynthesis; glycogen biosynthesis. Functionally, synthesizes alpha-1,4-glucan chains using ADP-glucose. The polypeptide is Glycogen synthase (Pseudomonas savastanoi pv. phaseolicola (strain 1448A / Race 6) (Pseudomonas syringae pv. phaseolicola (strain 1448A / Race 6))).